The following is a 185-amino-acid chain: Probable NEDD8-conjugating enzyme Ubc12-like (185 aa).

A disordered region spans residues 8 to 29 (KEKQREESQSNNGRGASTVKKQ). Positions 16 to 28 (QSNNGRGASTVKK) are enriched in polar residues. Positions 31 to 176 (AGELRLHKDI…VRRAMMGGQV (146 aa)) constitute a UBC core domain. The Glycyl thioester intermediate role is filled by cysteine 114.

It belongs to the ubiquitin-conjugating enzyme family. UBC12 subfamily.

It functions in the pathway protein modification; protein neddylation. Its function is as follows. Accepts the ubiquitin-like protein NEDD8/RUB1 from the ECR1-AXR1 E1 complex and catalyzes its covalent attachment to other proteins. The polypeptide is Probable NEDD8-conjugating enzyme Ubc12-like (RCE2) (Arabidopsis thaliana (Mouse-ear cress)).